The following is a 219-amino-acid chain: Octanoyltransferase (219 aa).

The region spanning Ala32–Asn207 is the BPL/LPL catalytic domain. Substrate is bound by residues Arg71 to His78, Ser138 to Gly140, and Gly151 to Ala153. Cys169 functions as the Acyl-thioester intermediate in the catalytic mechanism.

Belongs to the LipB family.

The protein resides in the cytoplasm. It carries out the reaction octanoyl-[ACP] + L-lysyl-[protein] = N(6)-octanoyl-L-lysyl-[protein] + holo-[ACP] + H(+). The protein operates within protein modification; protein lipoylation via endogenous pathway; protein N(6)-(lipoyl)lysine from octanoyl-[acyl-carrier-protein]: step 1/2. Functionally, catalyzes the transfer of endogenously produced octanoic acid from octanoyl-acyl-carrier-protein onto the lipoyl domains of lipoate-dependent enzymes. Lipoyl-ACP can also act as a substrate although octanoyl-ACP is likely to be the physiological substrate. In Shewanella sediminis (strain HAW-EB3), this protein is Octanoyltransferase.